We begin with the raw amino-acid sequence, 317 residues long: tRNA dimethylallyltransferase (317 aa).

14–21 serves as a coordination point for ATP; the sequence is GPTAVGKT. 16-21 is a binding site for substrate; sequence TAVGKT. The segment at 39–42 is interaction with substrate tRNA; that stretch reads DSMQ.

Belongs to the IPP transferase family. In terms of assembly, monomer. Mg(2+) serves as cofactor.

The catalysed reaction is adenosine(37) in tRNA + dimethylallyl diphosphate = N(6)-dimethylallyladenosine(37) in tRNA + diphosphate. Its function is as follows. Catalyzes the transfer of a dimethylallyl group onto the adenine at position 37 in tRNAs that read codons beginning with uridine, leading to the formation of N6-(dimethylallyl)adenosine (i(6)A). The sequence is that of tRNA dimethylallyltransferase from Bacillus cereus (strain AH820).